The following is a 593-amino-acid chain: Mitochondrial sodium/calcium exchanger protein (593 aa).

Positions 1–20 are cleaved as a signal peptide; the sequence is MGPLWALRVAGALSVAGVLA. The Extracellular segment spans residues 21 to 93; that stretch reads GHDGSQRAGQ…GAFCTFPSSL (73 aa). Asn-58 carries N-linked (GlcNAc...) asparagine glycosylation. Residues 94 to 114 traverse the membrane as a helical segment; the sequence is LPLSVSLYALWLLYLFVILGV. Topologically, residues 115 to 135 are cytoplasmic; sequence TAEKFFCPNLSAISTNLKLSH. The chain crosses the membrane as a helical span at residues 136–158; sequence NGLGVVGHSLTPALHGVTFLAFG. Over 159-178 the chain is Extracellular; it reads NGAPDIFSAVVAFSDPRTAG. The chain crosses the membrane as a helical span at residues 179–199; sequence LAVGAIFGAGIFVTTVVAGGI. The Cytoplasmic segment spans residues 200-215; it reads ALVKPFAAASRPFLRD. A helical membrane pass occupies residues 216–236; the sequence is VIFYMVAVFLTFLVLYFGYIT. The Extracellular portion of the chain corresponds to 237–239; sequence LGE. A helical transmembrane segment spans residues 240-260; that stretch reads ALGYLGLYVFYVFTVVLCTWI. At 261–334 the chain is on the cytoplasmic side; it reads HRWQRGDGPP…KWRRKPWYWR (74 aa). Residues 268–277 show a composition bias toward pro residues; that stretch reads GPPPPGPWEP. A disordered region spans residues 268-291; that stretch reads GPPPPGPWEPAIPTDAEEQESSGT. A helical membrane pass occupies residues 335 to 355; sequence LFKVLKVPVELVLLLTVPVVD. The Extracellular portion of the chain corresponds to 356–369; the sequence is PDKDDLNWKRPLNC. The helical transmembrane segment at 370-390 threads the bilayer; it reads LHIVTGPLLCIFTLKSGAYGL. At 391 to 395 the chain is on the cytoplasmic side; sequence YQIQG. Residues 396-416 traverse the membrane as a helical segment; it reads VFPVWALVALAGSVLAIIVFV. The Extracellular segment spans residues 417 to 428; the sequence is TTHNEEPPKYHC. A helical transmembrane segment spans residues 429-449; sequence VFAFLGFLSSAMWINAAATEL. Over 450 to 454 the chain is Cytoplasmic; that stretch reads VNILR. Residues 455–475 traverse the membrane as a helical segment; sequence TLGIIFELSNTVLGLTLLAWG. Residues 476 to 496 are Extracellular-facing; the sequence is NSIGDTFSDLTMARQGYPRMA. The chain crosses the membrane as a helical span at residues 497–517; sequence FSACFGGIIFNILVGVGLGCL. The Cytoplasmic segment spans residues 518–533; the sequence is LQMTNSQMVVKLEPDS. The chain crosses the membrane as a helical span at residues 534-554; the sequence is LLVWILAGALGLSLVFSFVAV. The Extracellular segment spans residues 555–564; sequence PAQCFQLGKA. The chain crosses the membrane as a helical span at residues 565–585; the sequence is YGTCLILYYLVFLCVALLTEF. The Cytoplasmic segment spans residues 586–593; the sequence is RVIHLAAT.

This sequence belongs to the Ca(2+):cation antiporter (CaCA) (TC 2.A.19) family. SLC24A subfamily.

The protein localises to the mitochondrion inner membrane. It carries out the reaction Ca(2+)(in) + 3 Na(+)(out) = Ca(2+)(out) + 3 Na(+)(in). Functionally, mitochondrial sodium/calcium antiporter that mediates sodium-dependent calcium efflux from mitochondrion, by mediating the exchange of 3 sodium ions per 1 calcium ion. Plays a central role in mitochondrial calcium homeostasis by mediating mitochondrial calcium extrusion: calcium efflux is essential for mitochondrial function and cell survival, notably in cardiomyocytes. Involved in B-lymphocyte chemotaxis. This Gallus gallus (Chicken) protein is Mitochondrial sodium/calcium exchanger protein.